Consider the following 1229-residue polypeptide: Pesticidal crystal protein Cry1Bb (1229 aa).

Belongs to the delta endotoxin family.

Its function is as follows. Promotes colloidosmotic lysis by binding to the midgut epithelial cells of many lepidopteran larvae. The sequence is that of Pesticidal crystal protein Cry1Bb (cry1Bb) from Bacillus thuringiensis.